The following is a 397-amino-acid chain: Methylthioribose kinase (397 aa).

ATP contacts are provided by residues Asn43, Lys60, and 114 to 116 (EDL). Asp232 is a substrate binding site. ATP is bound at residue 249–251 (DPE). Arg340 lines the substrate pocket.

This sequence belongs to the methylthioribose kinase family. In terms of assembly, homodimer.

The catalysed reaction is 5-(methylsulfanyl)-D-ribose + ATP = 5-(methylsulfanyl)-alpha-D-ribose 1-phosphate + ADP + H(+). Its pathway is amino-acid biosynthesis; L-methionine biosynthesis via salvage pathway; S-methyl-5-thio-alpha-D-ribose 1-phosphate from S-methyl-5'-thioadenosine (hydrolase route): step 2/2. Catalyzes the phosphorylation of methylthioribose into methylthioribose-1-phosphate. This chain is Methylthioribose kinase, found in Bacillus pumilus (strain SAFR-032).